The chain runs to 165 residues: Large ribosomal subunit protein uL10 (165 aa).

Belongs to the universal ribosomal protein uL10 family. In terms of assembly, part of the ribosomal stalk of the 50S ribosomal subunit. The N-terminus interacts with L11 and the large rRNA to form the base of the stalk. The C-terminus forms an elongated spine to which L12 dimers bind in a sequential fashion forming a multimeric L10(L12)X complex.

Its function is as follows. Forms part of the ribosomal stalk, playing a central role in the interaction of the ribosome with GTP-bound translation factors. This is Large ribosomal subunit protein uL10 from Sodalis glossinidius (strain morsitans).